A 213-amino-acid polypeptide reads, in one-letter code: MKPYQRQFIEFALNKQVLKFGEFTLKSGRKSPYFFNAGLFNTGRDLALLGRFYAEALVDSGIDFDLLFGPAYKGIPIATTTAVALAEHHDRDVPYCFNRKEAKTHGEGGNLVGSELQGRIMLVDDVITAGTAIRESMEIIQANGASLAGVLISLDRQERGRGEISAIQEVERDYGCNVISIITLKDLIAYLEEKPEMADHLASVRAYREEFGV.

Residue K26 participates in 5-phospho-alpha-D-ribose 1-diphosphate binding. 34–35 (FF) contributes to the orotate binding site. 5-phospho-alpha-D-ribose 1-diphosphate contacts are provided by residues 72–73 (YK), R99, K100, K103, H105, and 124–132 (DDVITAGTA). Orotate is bound by residues T128 and R156.

The protein belongs to the purine/pyrimidine phosphoribosyltransferase family. PyrE subfamily. As to quaternary structure, homodimer. The cofactor is Mg(2+).

The enzyme catalyses orotidine 5'-phosphate + diphosphate = orotate + 5-phospho-alpha-D-ribose 1-diphosphate. It functions in the pathway pyrimidine metabolism; UMP biosynthesis via de novo pathway; UMP from orotate: step 1/2. Functionally, catalyzes the transfer of a ribosyl phosphate group from 5-phosphoribose 1-diphosphate to orotate, leading to the formation of orotidine monophosphate (OMP). The protein is Orotate phosphoribosyltransferase of Enterobacter sp. (strain 638).